Reading from the N-terminus, the 368-residue chain is Isopentenyl-diphosphate delta-isomerase (368 aa).

7-8 contributes to the substrate binding site; the sequence is RK. FMN-binding positions include Thr-65, 66-68, Ser-96, and Asn-125; that span reads GMT. Residue 96 to 98 participates in substrate binding; it reads SQR. Gln-160 serves as a coordination point for substrate. Glu-161 lines the Mg(2+) pocket. Residues Lys-193, Ser-218, Thr-223, 275 to 277, and 296 to 297 each bind FMN; these read GIR and AL.

The protein belongs to the IPP isomerase type 2 family. As to quaternary structure, homooctamer. Dimer of tetramers. It depends on FMN as a cofactor. NADPH is required as a cofactor. Requires Mg(2+) as cofactor.

Its subcellular location is the cytoplasm. The catalysed reaction is isopentenyl diphosphate = dimethylallyl diphosphate. Functionally, involved in the biosynthesis of isoprenoids. Catalyzes the 1,3-allylic rearrangement of the homoallylic substrate isopentenyl (IPP) to its allylic isomer, dimethylallyl diphosphate (DMAPP). In Saccharolobus islandicus (strain L.S.2.15 / Lassen #1) (Sulfolobus islandicus), this protein is Isopentenyl-diphosphate delta-isomerase.